The chain runs to 592 residues: uncharacterized protein (592 aa).

Positions methionine 1 to alanine 23 are cleaved as a signal peptide. The active-site Nucleophile is serine 37. Residues aspartate 294 and histidine 297 contribute to the active site. The region spanning histidine 334–proline 592 is the Autotransporter domain. The disordered stretch occupies residues phenylalanine 572–proline 592.

This sequence belongs to the 'GDSL' lipolytic enzyme family.

This is an uncharacterized protein from Pseudomonas putida (Arthrobacter siderocapsulatus).